A 397-amino-acid chain; its full sequence is RNA pseudouridine synthase 5 (397 aa).

The region spanning 64–114 (APLPGWIKRIRDGQITVDGEVATDPDMILREGSKLVYHRLPWQEPFAPHLL) is the S4 RNA-binding domain.

The protein belongs to the pseudouridine synthase RluA family.

The enzyme catalyses a uridine in RNA = a pseudouridine in RNA. This is RNA pseudouridine synthase 5 from Oryza sativa subsp. japonica (Rice).